The sequence spans 403 residues: Argininosuccinate synthase (403 aa).

Residues 12–20 (AYSGGLDTS) and Ala39 each bind ATP. L-citrulline is bound at residue Tyr91. Residue Gly121 participates in ATP binding. The L-aspartate site is built by Thr123, Asn127, and Asp128. Asn127 serves as a coordination point for L-citrulline. L-citrulline is bound by residues Arg131, Ser180, Ser189, Glu265, and Tyr277.

This sequence belongs to the argininosuccinate synthase family. Type 1 subfamily. In terms of assembly, homotetramer.

The protein localises to the cytoplasm. The catalysed reaction is L-citrulline + L-aspartate + ATP = 2-(N(omega)-L-arginino)succinate + AMP + diphosphate + H(+). Its pathway is amino-acid biosynthesis; L-arginine biosynthesis; L-arginine from L-ornithine and carbamoyl phosphate: step 2/3. In Buchnera aphidicola subsp. Acyrthosiphon pisum (strain 5A), this protein is Argininosuccinate synthase.